A 364-amino-acid polypeptide reads, in one-letter code: Peptide chain release factor 1 (364 aa).

Gln230 carries the post-translational modification N5-methylglutamine.

Belongs to the prokaryotic/mitochondrial release factor family. Methylated by PrmC. Methylation increases the termination efficiency of RF1.

It localises to the cytoplasm. In terms of biological role, peptide chain release factor 1 directs the termination of translation in response to the peptide chain termination codons UAG and UAA. This chain is Peptide chain release factor 1, found in Acidothermus cellulolyticus (strain ATCC 43068 / DSM 8971 / 11B).